Reading from the N-terminus, the 87-residue chain is Small ribosomal subunit protein bS16 (87 aa).

Belongs to the bacterial ribosomal protein bS16 family.

In Ehrlichia chaffeensis (strain ATCC CRL-10679 / Arkansas), this protein is Small ribosomal subunit protein bS16.